A 167-amino-acid chain; its full sequence is Translationally-controlled tumor protein homolog (167 aa).

The TCTP domain occupies 1-167 (MKLFTDIISN…WKDGLRETKI (167 aa)).

This sequence belongs to the TCTP family.

It localises to the cytoplasm. The protein resides in the cytoskeleton. Functionally, involved in protein synthesis. Involved in microtubule stabilization. This Mycosarcoma maydis (Corn smut fungus) protein is Translationally-controlled tumor protein homolog.